The primary structure comprises 164 residues: Ribonuclease P protein component 2 (164 aa).

The protein belongs to the eukaryotic/archaeal RNase P protein component 2 family. As to quaternary structure, consists of a catalytic RNA component and at least 4-5 protein subunits.

The protein resides in the cytoplasm. It carries out the reaction Endonucleolytic cleavage of RNA, removing 5'-extranucleotides from tRNA precursor.. In terms of biological role, part of ribonuclease P, a protein complex that generates mature tRNA molecules by cleaving their 5'-ends. This is Ribonuclease P protein component 2 from Halobacterium salinarum (strain ATCC 29341 / DSM 671 / R1).